Here is a 357-residue protein sequence, read N- to C-terminus: tRNA/tmRNA (uracil-C(5))-methyltransferase (357 aa).

S-adenosyl-L-methionine contacts are provided by Gln180, Tyr209, Asn214, Glu230, and Asp290. Cys315 acts as the Nucleophile in catalysis. Catalysis depends on Glu349, which acts as the Proton acceptor.

This sequence belongs to the class I-like SAM-binding methyltransferase superfamily. RNA M5U methyltransferase family. TrmA subfamily.

It carries out the reaction uridine(54) in tRNA + S-adenosyl-L-methionine = 5-methyluridine(54) in tRNA + S-adenosyl-L-homocysteine + H(+). It catalyses the reaction uridine(341) in tmRNA + S-adenosyl-L-methionine = 5-methyluridine(341) in tmRNA + S-adenosyl-L-homocysteine + H(+). Functionally, dual-specificity methyltransferase that catalyzes the formation of 5-methyluridine at position 54 (m5U54) in all tRNAs, and that of position 341 (m5U341) in tmRNA (transfer-mRNA). The polypeptide is tRNA/tmRNA (uracil-C(5))-methyltransferase (Campylobacter jejuni subsp. jejuni serotype O:2 (strain ATCC 700819 / NCTC 11168)).